Here is a 628-residue protein sequence, read N- to C-terminus: Glutamyl-tRNA(Gln) amidotransferase subunit E (628 aa).

This sequence belongs to the GatB/GatE family. GatE subfamily. In terms of assembly, heterodimer of GatD and GatE.

It carries out the reaction L-glutamyl-tRNA(Gln) + L-glutamine + ATP + H2O = L-glutaminyl-tRNA(Gln) + L-glutamate + ADP + phosphate + H(+). Allows the formation of correctly charged Gln-tRNA(Gln) through the transamidation of misacylated Glu-tRNA(Gln) in organisms which lack glutaminyl-tRNA synthetase. The reaction takes place in the presence of glutamine and ATP through an activated gamma-phospho-Glu-tRNA(Gln). The GatDE system is specific for glutamate and does not act on aspartate. The chain is Glutamyl-tRNA(Gln) amidotransferase subunit E from Sulfurisphaera tokodaii (strain DSM 16993 / JCM 10545 / NBRC 100140 / 7) (Sulfolobus tokodaii).